Consider the following 161-residue polypeptide: MPIDQEKLAKLQKLSANNKVGGTRRKLAKKSGTASANKDDSKLQAQLAKLKAVTMDQVEEANFFKDDGSVLHFNKVGVQVAPQHNTSVFYGIPQEKSLQDLFPSIIPQLGSESIDALTQLATQLQNAQAAAPATEGHEAGEKKDNDIPELIEGQSFDADVE.

2 disordered regions span residues 14-41 (LSAN…KDDS) and 125-161 (QNAQ…ADVE). The region spanning 37-102 (NKDDSKLQAQ…PQEKSLQDLF (66 aa)) is the NAC-A/B domain. The segment covering 125–134 (QNAQAAAPAT) has biased composition (low complexity). The segment covering 135–146 (EGHEAGEKKDND) has biased composition (basic and acidic residues).

The protein belongs to the NAC-beta family. As to quaternary structure, part of the nascent polypeptide-associated complex (NAC), consisting of EGD2 and EGD1. NAC associates with ribosomes via EGD1.

The protein resides in the cytoplasm. It is found in the nucleus. Its function is as follows. Component of the nascent polypeptide-associated complex (NAC), a dynamic component of the ribosomal exit tunnel, protecting the emerging polypeptides from interaction with other cytoplasmic proteins to ensure appropriate nascent protein targeting. The NAC complex also promotes mitochondrial protein import by enhancing productive ribosome interactions with the outer mitochondrial membrane and blocks the inappropriate interaction of ribosomes translating non-secretory nascent polypeptides with translocation sites in the membrane of the endoplasmic reticulum. EGD1 may act as a transcription factor that exert a negative effect on the expression of several genes that are transcribed by RNA polymerase II. The polypeptide is Nascent polypeptide-associated complex subunit beta (EGD1) (Eremothecium gossypii (strain ATCC 10895 / CBS 109.51 / FGSC 9923 / NRRL Y-1056) (Yeast)).